Here is a 299-residue protein sequence, read N- to C-terminus: Farnesyl diphosphate synthase (299 aa).

Isopentenyl diphosphate-binding residues include Lys-45, Arg-48, and His-77. Mg(2+) contacts are provided by Asp-84 and Asp-90. Residue Arg-95 coordinates (2E)-geranyl diphosphate. Arg-96 contacts isopentenyl diphosphate. The (2E)-geranyl diphosphate site is built by Lys-181, Thr-182, Gln-220, and Lys-237.

This sequence belongs to the FPP/GGPP synthase family. Mg(2+) serves as cofactor.

The protein resides in the cytoplasm. It catalyses the reaction isopentenyl diphosphate + (2E)-geranyl diphosphate = (2E,6E)-farnesyl diphosphate + diphosphate. The protein is Farnesyl diphosphate synthase (ispA) of Escherichia coli (strain K12).